The primary structure comprises 1151 residues: Nardilysin (1151 aa).

An N-terminal signal peptide occupies residues 1–20 (MLRRVTVAAVCATRRKLCEA). Disordered stretches follow at residues 53–108 (RNKA…KSPS) and 133–207 (MEGK…KKTT). Residues Ser-86, Ser-94, and Ser-96 each carry the phosphoserine modification. Residues 141 to 198 (TDDEEEEEVEEEEEDDDEDSGAEIEDDDEEGFDDEDEFDDEHDDDLDTEDNELEELEE) are compositionally biased toward acidic residues. His-233 is a Zn(2+) binding site. Glu-236 functions as the Proton acceptor in the catalytic mechanism. The Zn(2+) site is built by His-237 and Glu-314.

Belongs to the peptidase M16 family. Interacts with BACE1 and NRG1. The cofactor is Zn(2+). As to expression, primarily in adult heart, skeletal muscle, and testis and at much lower levels in other tissues.

It localises to the mitochondrion. The protein localises to the cell projection. It is found in the dendrite. It carries out the reaction Hydrolysis of polypeptides, preferably at -Xaa-|-Arg-Lys-, and less commonly at -Arg-|-Arg-Xaa-, in which Xaa is not Arg or Lys.. Functionally, cleaves peptide substrates on the N-terminus of arginine residues in dibasic pairs. Is a critical activator of BACE1- and ADAM17-mediated pro-neuregulin ectodomain shedding, involved in the positive regulation of axonal maturation and myelination. Required for proper functioning of 2-oxoglutarate dehydrogenase (OGDH). The protein is Nardilysin of Homo sapiens (Human).